A 563-amino-acid chain; its full sequence is Arginine--tRNA ligase (563 aa).

The 'HIGH' region signature appears at 108 to 118 (PNVAKEMHVGH).

Belongs to the class-I aminoacyl-tRNA synthetase family. In terms of assembly, monomer.

It localises to the cytoplasm. The enzyme catalyses tRNA(Arg) + L-arginine + ATP = L-arginyl-tRNA(Arg) + AMP + diphosphate. This is Arginine--tRNA ligase (argS) from Pasteurella multocida (strain Pm70).